Consider the following 373-residue polypeptide: Flap endonuclease 1 (373 aa).

The N-domain stretch occupies residues 1-105 (MGIKGLNALI…GELEKRLKRR (105 aa)). Aspartate 34 provides a ligand contact to Mg(2+). Positions 47 and 71 each coordinate DNA. Mg(2+) contacts are provided by aspartate 87, glutamate 159, glutamate 161, aspartate 180, and aspartate 182. Positions 123–254 (DIAKFERRTV…VTAFKLIKEH (132 aa)) are I-domain. DNA is bound at residue glutamate 159. Residues glycine 232 and aspartate 234 each coordinate DNA. Aspartate 234 lines the Mg(2+) pocket. Positions 340-348 (TQGRLDKFF) are interaction with PCNA. The tract at residues 347 to 373 (FFVVKKRPAEEKKGKNTKEEKPKKKRK) is disordered.

It belongs to the XPG/RAD2 endonuclease family. FEN1 subfamily. In terms of assembly, interacts with PCNA. Three molecules of FEN1 bind to one PCNA trimer with each molecule binding to one PCNA monomer. PCNA stimulates the nuclease activity without altering cleavage specificity. Mg(2+) is required as a cofactor. In terms of processing, phosphorylated. Phosphorylation upon DNA damage induces relocalization to the nuclear plasma.

It localises to the nucleus. It is found in the nucleolus. The protein resides in the nucleoplasm. The protein localises to the mitochondrion. Its function is as follows. Structure-specific nuclease with 5'-flap endonuclease and 5'-3' exonuclease activities involved in DNA replication and repair. During DNA replication, cleaves the 5'-overhanging flap structure that is generated by displacement synthesis when DNA polymerase encounters the 5'-end of a downstream Okazaki fragment. It enters the flap from the 5'-end and then tracks to cleave the flap base, leaving a nick for ligation. Also involved in the long patch base excision repair (LP-BER) pathway, by cleaving within the apurinic/apyrimidinic (AP) site-terminated flap. Acts as a genome stabilization factor that prevents flaps from equilibrating into structures that lead to duplications and deletions. Also possesses 5'-3' exonuclease activity on nicked or gapped double-stranded DNA, and exhibits RNase H activity. Also involved in replication and repair of rDNA and in repairing mitochondrial DNA. This chain is Flap endonuclease 1, found in Komagataella phaffii (strain GS115 / ATCC 20864) (Yeast).